The following is a 398-amino-acid chain: Enoyl-[acyl-carrier-protein] reductase [NADH] (398 aa).

Residues 48–53, 74–75, 111–112, and 139–140 each bind NAD(+); these read GSSTGY, FE, DA, and LA. Tyrosine 225 serves as a coordination point for substrate. The active-site Proton donor is the tyrosine 235. Residues lysine 244 and 273–275 contribute to the NAD(+) site; that span reads VVT.

The protein belongs to the TER reductase family. In terms of assembly, monomer.

The enzyme catalyses a 2,3-saturated acyl-[ACP] + NAD(+) = a (2E)-enoyl-[ACP] + NADH + H(+). It functions in the pathway lipid metabolism; fatty acid biosynthesis. Its function is as follows. Involved in the final reduction of the elongation cycle of fatty acid synthesis (FAS II). Catalyzes the reduction of a carbon-carbon double bond in an enoyl moiety that is covalently linked to an acyl carrier protein (ACP). This Pseudomonas paraeruginosa (strain DSM 24068 / PA7) (Pseudomonas aeruginosa (strain PA7)) protein is Enoyl-[acyl-carrier-protein] reductase [NADH].